The chain runs to 337 residues: tRNA N6-adenosine threonylcarbamoyltransferase (337 aa).

Residues His111 and His115 each contribute to the Fe cation site. Residues 134-138, Asp167, Gly180, and Asn272 each bind substrate; that span reads LVSGG. Asp300 contacts Fe cation.

Belongs to the KAE1 / TsaD family. Requires Fe(2+) as cofactor.

The protein resides in the cytoplasm. It catalyses the reaction L-threonylcarbamoyladenylate + adenosine(37) in tRNA = N(6)-L-threonylcarbamoyladenosine(37) in tRNA + AMP + H(+). Its function is as follows. Required for the formation of a threonylcarbamoyl group on adenosine at position 37 (t(6)A37) in tRNAs that read codons beginning with adenine. Is involved in the transfer of the threonylcarbamoyl moiety of threonylcarbamoyl-AMP (TC-AMP) to the N6 group of A37, together with TsaE and TsaB. TsaD likely plays a direct catalytic role in this reaction. The chain is tRNA N6-adenosine threonylcarbamoyltransferase from Salmonella newport (strain SL254).